Consider the following 529-residue polypeptide: Bifunctional purine biosynthesis protein PurH (529 aa).

The MGS-like domain occupies 1–148 (MQPPRPVRRA…KNHKDVAIVV (148 aa)).

The protein belongs to the PurH family.

The enzyme catalyses (6R)-10-formyltetrahydrofolate + 5-amino-1-(5-phospho-beta-D-ribosyl)imidazole-4-carboxamide = 5-formamido-1-(5-phospho-D-ribosyl)imidazole-4-carboxamide + (6S)-5,6,7,8-tetrahydrofolate. It catalyses the reaction IMP + H2O = 5-formamido-1-(5-phospho-D-ribosyl)imidazole-4-carboxamide. It functions in the pathway purine metabolism; IMP biosynthesis via de novo pathway; 5-formamido-1-(5-phospho-D-ribosyl)imidazole-4-carboxamide from 5-amino-1-(5-phospho-D-ribosyl)imidazole-4-carboxamide (10-formyl THF route): step 1/1. It participates in purine metabolism; IMP biosynthesis via de novo pathway; IMP from 5-formamido-1-(5-phospho-D-ribosyl)imidazole-4-carboxamide: step 1/1. This chain is Bifunctional purine biosynthesis protein PurH, found in Sodalis glossinidius (strain morsitans).